We begin with the raw amino-acid sequence, 148 residues long: 3-dehydroquinate dehydratase (148 aa).

Tyr23 serves as the catalytic Proton acceptor. Substrate contacts are provided by Asn75, His81, and Asp88. The active-site Proton donor is His101. Substrate-binding positions include 102 to 103 (LS) and Arg112.

Belongs to the type-II 3-dehydroquinase family. Homododecamer.

The enzyme catalyses 3-dehydroquinate = 3-dehydroshikimate + H2O. It functions in the pathway metabolic intermediate biosynthesis; chorismate biosynthesis; chorismate from D-erythrose 4-phosphate and phosphoenolpyruvate: step 3/7. Catalyzes a trans-dehydration via an enolate intermediate. This is 3-dehydroquinate dehydratase from Xylella fastidiosa (strain M23).